Consider the following 240-residue polypeptide: Glutathione S-transferase theta-1 (240 aa).

Residues 2–82 enclose the GST N-terminal domain; that stretch reads VLELYLDLLS…YLAHKYKVPD (81 aa). Residues H40, 53 to 54, and 66 to 67 contribute to the glutathione site; these read KV and ES. Residues 88-223 form the GST C-terminal domain; sequence DLQARARVDE…ILKVRDCPPA (136 aa).

The protein belongs to the GST superfamily. Theta family. As to quaternary structure, homodimer. In liver, highest expression found in central vein limiting plate hepatocytes. In lung, expressed mainly in club cells of the bronchiolar epithelium and, at low levels, in type II alveolar cells.

The protein localises to the cytoplasm. It carries out the reaction RX + glutathione = an S-substituted glutathione + a halide anion + H(+). Functionally, conjugation of reduced glutathione to a wide number of exogenous and endogenous hydrophobic electrophiles. Also binds steroids, bilirubin, carcinogens and numerous organic anions. Has dichloromethane dehalogenase activity. The protein is Glutathione S-transferase theta-1 (Gstt1) of Rattus norvegicus (Rat).